Reading from the N-terminus, the 117-residue chain is UPF0102 protein Spro_4337 (117 aa).

This sequence belongs to the UPF0102 family.

This is UPF0102 protein Spro_4337 from Serratia proteamaculans (strain 568).